The sequence spans 206 residues: D-ribitol-5-phosphate phosphatase (206 aa).

The Nucleophile role is filled by D8. Mg(2+)-binding residues include D8 and D172.

Belongs to the HAD-like hydrolase superfamily. It depends on Mg(2+) as a cofactor.

The catalysed reaction is D-ribitol 1-phosphate + H2O = ribitol + phosphate. It carries out the reaction D-ribitol 5-phosphate + H2O = ribitol + phosphate. It catalyses the reaction 5-amino-6-(5-phospho-D-ribitylamino)uracil + H2O = 5-amino-6-(D-ribitylamino)uracil + phosphate. Its pathway is cofactor biosynthesis; riboflavin biosynthesis; 5-amino-6-(D-ribitylamino)uracil from GTP: step 4/4. In terms of biological role, catalyzes the dephosphorylation of D-ribitol-5-phosphate and D-ribitol-1-phosphate. Is also able to dephosphorylate 5-amino-6-(5-phospho-D-ribitylamino)uracil, and thus could be involved in the riboflavin biosynthesis pathway. The chain is D-ribitol-5-phosphate phosphatase from Bacteroides thetaiotaomicron (strain ATCC 29148 / DSM 2079 / JCM 5827 / CCUG 10774 / NCTC 10582 / VPI-5482 / E50).